Reading from the N-terminus, the 236-residue chain is tRNA (guanine-N(7)-)-methyltransferase (236 aa).

S-adenosyl-L-methionine contacts are provided by Glu-43, Asp-68, Asn-102, and Asn-125. Substrate is bound by residues Lys-129 and Asp-161.

Belongs to the class I-like SAM-binding methyltransferase superfamily. TrmB family.

The catalysed reaction is guanosine(46) in tRNA + S-adenosyl-L-methionine = N(7)-methylguanosine(46) in tRNA + S-adenosyl-L-homocysteine. The protein operates within tRNA modification; N(7)-methylguanine-tRNA biosynthesis. In terms of biological role, catalyzes the formation of N(7)-methylguanine at position 46 (m7G46) in tRNA. This is tRNA (guanine-N(7)-)-methyltransferase from Ruminiclostridium cellulolyticum (strain ATCC 35319 / DSM 5812 / JCM 6584 / H10) (Clostridium cellulolyticum).